A 248-amino-acid chain; its full sequence is tRNA pseudouridine synthase A (248 aa).

Asp-53 acts as the Nucleophile in catalysis. Substrate is bound at residue Tyr-111.

It belongs to the tRNA pseudouridine synthase TruA family. In terms of assembly, homodimer.

The enzyme catalyses uridine(38/39/40) in tRNA = pseudouridine(38/39/40) in tRNA. Formation of pseudouridine at positions 38, 39 and 40 in the anticodon stem and loop of transfer RNAs. In Listeria monocytogenes serotype 4b (strain CLIP80459), this protein is tRNA pseudouridine synthase A.